Reading from the N-terminus, the 669-residue chain is MTESLIMNNISKYNISPQFNSDRIYNDPSLMDDEFSDNEYDLSPKDDVPSPSKRGRGQIQNGIRRSPNKWTEEEDQKLFQLVSIYGEKKWKRISAEMGGQKTGAQCAQHWKRVLSPDIRKGPWDEDEEELLLRLVNQHGSSWKKIAKRICKRTDIQCRYQYLKSLQSREVAWVPKEDEVLVKKVDEMGENLSWLEVSEYLAKLKHTNTLRTALECKTRYLQLTGKGGSILPPLNQSNVSSLNSSSANTFNQQLQYQQQQQQQQQQQQQQQQQQQQQMNNNYNNNYNNNNNNINNNYNNNHNNQNNNNNNNHNHYNNHYNQMNNNNNNNHYNNNNNNNNNINNNNNNNMYQMNNNNSNSNNNNKSHNLSPLSSIIDSNTSSPSFEGCEDNNNNNNNNNNNNNNNNNNNNNNNNSNNTPPNIFRPLPHKPVVTGLTSPTSSPIPSSPPLTPPTSLTLPSSTLSSPSCNNSIRQPSPSPSIKTFKSTIVSTPSRPSPSSSTNSAFSINNIIDSENNNNNNNNDNDNIKVEDNGCNEPVMKKVRSNGEFYYQPIKNKLNNNNNNNNNNNNNNNNNNNNNNNNNNNNGNNTLSYNSDNSSDDDMLPKLKNNKQILSNFKNHNNNQSNTSPMSSPISSPHQSSIEKLKATSFDFFKLESLATLASQSQIVNELVN.

The interval 27–69 (DPSLMDDEFSDNEYDLSPKDDVPSPSKRGRGQIQNGIRRSPNK) is disordered. Positions 30-40 (LMDDEFSDNEY) are enriched in acidic residues. HTH myb-type domains follow at residues 60–118 (QNGI…SPDI) and 119–170 (RKGP…SREV). 2 consecutive DNA-binding regions (H-T-H motif) follow at residues 90-114 (WKRISAEMGGQKTGAQCAQHWKRVL) and 142-166 (WKKIAKRICKRTDIQCRYQYLKSLQ). Residues 172 to 223 (WVPKEDEVLVKKVDEMGENLSWLEVSEYLAKLKHTNTLRTALECKTRYLQLT) enclose the Myb-like domain. Disordered stretches follow at residues 226–530 (GGSI…EDNG) and 550–636 (IKNK…PHQS). Low complexity-rich tracts occupy residues 234–382 (NQSN…SSPS), 389–415 (NNNNNNNNNNNNNNNNNNNNNNNNSNN), and 450–464 (PTSLTLPSSTLSSPS). The segment covering 465-482 (CNNSIRQPSPSPSIKTFK) has biased composition (polar residues). Low complexity-rich tracts occupy residues 483–521 (STIVSTPSRPSPSSSTNSAFSINNIIDSENNNNNNNNDN), 555–593 (NNNNNNNNNNNNNNNNNNNNNNNNNNNNGNNTLSYNSDN), and 611–636 (SNFKNHNNNQSNTSPMSSPISSPHQS).

It is found in the nucleus. The protein is Myb-like protein M (mybM) of Dictyostelium discoideum (Social amoeba).